We begin with the raw amino-acid sequence, 356 residues long: uncharacterized protein (356 aa).

This sequence belongs to the NAD(P)-dependent epimerase/dehydratase family. NAD(+) serves as cofactor. NADP(+) is required as a cofactor.

Its function is as follows. Putative nucleotide sugar epimerase/dehydrogenase. This is an uncharacterized protein from Sinorhizobium fredii (strain NBRC 101917 / NGR234).